The sequence spans 689 residues: Beta-galactosidase BbgII (689 aa).

Arg122 and Asn160 together coordinate substrate. Glu161 functions as the Proton donor in the catalytic mechanism. Catalysis depends on Glu320, which acts as the Nucleophile. Substrate is bound by residues Trp328 and 368-371 (EKWH).

It belongs to the glycosyl hydrolase 42 family.

It catalyses the reaction Hydrolysis of terminal non-reducing beta-D-galactose residues in beta-D-galactosides.. The polypeptide is Beta-galactosidase BbgII (Bifidobacterium bifidum (strain DSM 20082 / JCM 1254 / BCRC 11844 / KCTC 3440 / E319f (Variant a))).